The primary structure comprises 148 residues: Small ribosomal subunit protein uS7m (148 aa).

Belongs to the universal ribosomal protein uS7 family. Part of the small ribosomal subunit.

It is found in the mitochondrion. One of the primary rRNA binding proteins, it binds directly to 18S rRNA where it nucleates assembly of the head domain of the small subunit. This is Small ribosomal subunit protein uS7m (RPS7) from Triticum aestivum (Wheat).